Here is a 626-residue protein sequence, read N- to C-terminus: UvrABC system protein C (626 aa).

The 78-residue stretch at 20–97 (ECSGVYKMLD…IKKFQPKFNI (78 aa)) folds into the GIY-YIG domain. The UVR domain maps to 207–242 (IALQANLSKKMQELSSQMRFEEAAEIRDRIKALSYV).

It belongs to the UvrC family. As to quaternary structure, interacts with UvrB in an incision complex.

The protein localises to the cytoplasm. Functionally, the UvrABC repair system catalyzes the recognition and processing of DNA lesions. UvrC both incises the 5' and 3' sides of the lesion. The N-terminal half is responsible for the 3' incision and the C-terminal half is responsible for the 5' incision. In Rickettsia prowazekii (strain Madrid E), this protein is UvrABC system protein C.